The sequence spans 90 residues: Putative toxin RelE1 (90 aa).

It belongs to the RelE toxin family.

Functionally, toxic component of a type II toxin-antitoxin (TA) system. Its cognate antitoxin is RelB1 (Potential). This Methanocaldococcus jannaschii (strain ATCC 43067 / DSM 2661 / JAL-1 / JCM 10045 / NBRC 100440) (Methanococcus jannaschii) protein is Putative toxin RelE1 (relE1).